Reading from the N-terminus, the 152-residue chain is Large ribosomal subunit protein bL9 (152 aa).

Belongs to the bacterial ribosomal protein bL9 family.

Its function is as follows. Binds to the 23S rRNA. In Mycobacterium sp. (strain JLS), this protein is Large ribosomal subunit protein bL9.